The following is a 481-amino-acid chain: Drebrin-like protein (481 aa).

Positions 3 to 131 (SLDISDPDIT…DEKAITAALN (129 aa)) constitute an ADF-H domain. Residues 217-227 (YWKQQQAEKQK) are compositionally biased toward basic and acidic residues. Residues 217–423 (YWKQQQAEKQ…PAEEQYDQSG (207 aa)) are disordered. The span at 228 to 237 (QQQQQQQQQA) shows a compositional bias: low complexity. Residues 248 to 261 (TVGNKFQEQVSKPT) are compositionally biased toward polar residues. Over residues 291–300 (PPAPSRPAAP) the composition is skewed to pro residues. Acidic residues predominate over residues 325–335 (QYEEPQYEEEQ). Positions 336-413 (QQQYEEQPTE…YQEEQQQYEQ (78 aa)) are enriched in low complexity. Residues 422-481 (SGYLQAKALYDYNGENDGDLSFREGDIITILDQSDPDGWWQGSLPTGEQGFFPSNFVQQL) enclose the SH3 domain.

Belongs to the ABP1 family.

It localises to the cytoplasm. The protein resides in the cytoskeleton. Its subcellular location is the cell projection. It is found in the pseudopodium. Its function is as follows. Actin-binding adapter protein. Binds to F-actin but is not involved in actin polymerization, capping or bundling. Does not bind G-actin. Controls pseudopodium number and motility in early stages of chemotactic aggregation. The protein is Drebrin-like protein (abpE-1) of Dictyostelium discoideum (Social amoeba).